The sequence spans 958 residues: N-terminal acetyltransferase B complex subunit NAA25 homolog (958 aa).

TPR repeat units lie at residues alanine 7–threonine 42, glutamate 78–glutamate 111, and phenylalanine 320–tyrosine 353.

This sequence belongs to the MDM20/NAA25 family. Component of the N-terminal acetyltransferase B (NatB) complex. Interacts with acer-1. As to expression, expressed in germline and somatic cells.

It localises to the cytoplasm. Its subcellular location is the nucleus. The protein localises to the chromosome. Its function is as follows. Non-catalytic subunit of the NatB complex which catalyzes acetylation of the N-terminal methionine residues of proteins beginning with Met-Asp or Met-Glu. Required for chromosome organization and arrangement; specifically for assembly of the central region components of the synaptonemal complex onto chromosomes during meiosis and for DNA double stranded break formation and repair. Acts downstream of xnd-1 to regulate levels of histone acetylation in germ and somatic cell nuclei by controlling acetyl-CoA production through antagonizing the acetyl-CoA hydrolase activity of acer-1. This chain is N-terminal acetyltransferase B complex subunit NAA25 homolog, found in Caenorhabditis elegans.